We begin with the raw amino-acid sequence, 1367 residues long: Collagen alpha-1(XV) chain (1367 aa).

The N-terminal stretch at 1 to 31 is a signal peptide; sequence MTHRRTAQGRRPRWLLSIISALLSAVLQTRA. The region spanning 54–249 is the Laminin G-like domain; sequence SVSFTTGYGG…SSASGEASGF (196 aa). The nonhelical region 1 (NC1) stretch occupies residues 229 to 604; that stretch reads RTPEELCEAQ…DIVGNEDLLR (376 aa). O-linked (Xyl...) (chondroitin sulfate) serine glycosylation is found at S243 and S247. The interval 267–319 is disordered; it reads APPKESHVDPISVPPTSSSPAEDSELSGEPVPEGTPETNLSIIGHSSPEQGSG. Residues N305 and N323 are each glycosylated (N-linked (GlcNAc...) asparagine). S341 is a glycosylation site (O-linked (Xyl...) (chondroitin sulfate) serine). 3 N-linked (GlcNAc...) asparagine glycosylation sites follow: N348, N375, and N402. Disordered regions lie at residues 396 to 446 and 529 to 784; these read DTPD…SHGE and TAEP…GHVE. The span at 402–429 shows a compositional bias: polar residues; it reads NLTTTASGDGEVPTSTDGDTEADSSPTG. The segment covering 434-446 has biased composition (basic and acidic residues); it reads KPREEATLGSHGE. Over residues 555–564 the composition is skewed to pro residues; it reads PSGPPLPTPT. The span at 582-595 shows a compositional bias: gly residues; it reads GPVGGLDEGSGSGD. Collagen-like domains follow at residues 605–665 and 666–717; these read GPPG…GMKG and EKGA…PPGP. The interval 605-718 is triple-helical region 1 (COL1); it reads GPPGPPGPPG…PGPPGPPGPG (114 aa). Over residues 606 to 616 the composition is skewed to pro residues; that stretch reads PPGPPGPPGSP. N673 is a glycosylation site (N-linked (GlcNAc...) asparagine). Over residues 703–717 the composition is skewed to pro residues; the sequence is MGPPGPPGPPGPPGP. The nonhelical region 2 (NC2) stretch occupies residues 719–748; it reads CTTELGFEIEGSGDVRLLSKPTISGPTSPS. The O-linked (Xyl...) (chondroitin sulfate) serine glycan is linked to S730. The segment covering 737-750 has biased composition (low complexity); that stretch reads SKPTISGPTSPSGP. A triple-helical region 2 (COL2) region spans residues 749–783; sequence GPKGEKGEQGAKGERGADGTSTMGPPGPRGPPGHV. The span at 751–765 shows a compositional bias: basic and acidic residues; sequence KGEKGEQGAKGERGA. The interval 784–807 is nonhelical region 3 (NC3); that stretch reads EVLSSSLINITNGSMNFSDIPELM. Residues N792, N795, and N799 are each glycosylated (N-linked (GlcNAc...) asparagine). Collagen-like domains lie at 808 to 850 and 863 to 912; these read GPPG…GEPG and KGRK…GDRG. The interval 808–852 is triple-helical region 3 (COL3); the sequence is GPPGPDGVPGLPGFPGPRGPKGDTGVPGFPGLKGEQGEKGEPGAI. Positions 853–863 are nonhelical region 4 (NC4); the sequence is LTGDVPLEMMK. The segment at 864-934 is triple-helical region 4 (COL4); sequence GRKGEPGIHG…PGPPGPPGAV (71 aa). The disordered stretch occupies residues 905–930; that stretch reads KGAKGDRGVTLPGPPGLPGPPGPPGP. Over residues 916 to 930 the composition is skewed to pro residues; that stretch reads PGPPGLPGPPGPPGP. The segment at 935–968 is nonhelical region 5 (NC5); that stretch reads VNIKGAVFPIPARPHCKTPVGTAHPGDPELVTFH. The segment at 969 to 998 is triple-helical region 5 (COL5); sequence GVKGEKGSWGLPGSKGEKGDQGAQGPPGPP. Disordered stretches follow at residues 974–1000 and 1055–1089; these read KGSWGLPGSKGEKGDQGAQGPPGPPVD and GPPGIPGLPGPPGFGRPGVPGPPGPPGPPGPPAIL. The nonhelical region 6 (NC6) stretch occupies residues 999–1031; the sequence is VDPAYLRHFLNSLKGENEDASFRGESSNNLFVS. The segment at 1032-1086 is triple-helical region 6 (COL6); the sequence is GPPGLPGYPGLVGQKGEAVVGPQGPPGIPGLPGPPGFGRPGVPGPPGPPGPPGPP. A compositionally biased stretch (pro residues) spans 1055–1086; it reads GPPGIPGLPGPPGFGRPGVPGPPGPPGPPGPP. Residues 1087-1096 are nonhelical region 7 (NC7); that stretch reads AILGAAVALP. The interval 1097 to 1111 is triple-helical region 7 (COL7); that stretch reads GPPGPPGQPGLPGSR. Residues 1112 to 1367 form a nonhelical region 8 (NC8) region; sequence NLVTALSDMG…ENSFMTDTRK (256 aa). 2 disulfides stabilise this stretch: C1216-C1356 and C1318-C1348.

Belongs to the multiplexin collagen family. As to quaternary structure, trimer; disulfide-linked. In terms of assembly, interacts moderately with EFEMP2. Prolines at the third position of the tripeptide repeating unit (G-X-Y) are hydroxylated in some or all of the chains. Post-translationally, O-glycosylated; contains chondroitin sulfate. Detected in testis, brain, heart, kidney, skeletal muscle and skin (at protein level). Detected in heart and skeletal muscle.

The protein resides in the secreted. The protein localises to the extracellular space. It localises to the extracellular matrix. Functionally, structural protein that stabilizes microvessels and muscle cells, both in heart and in skeletal muscle. In terms of biological role, restin potently inhibits angiogenesis. This Mus musculus (Mouse) protein is Collagen alpha-1(XV) chain (Col15a1).